Consider the following 402-residue polypeptide: Multidrug resistance protein MdtH (402 aa).

11 consecutive transmembrane segments (helical) span residues 13–33 (YFLL…FPLI), 34–54 (SIRF…ALGL), 99–116 (PWLL…GTLF), 139–159 (LLMM…SWLL), 165–185 (LVCA…AWLL), 214–234 (VLTL…LPIM), 243–263 (AAVK…LYPI), 277–297 (LMAG…VSSV), 300–320 (LFVL…ARET), 340–360 (LGLA…FDSG), and 368–388 (LPWV…WWQF).

The protein belongs to the major facilitator superfamily. DHA1 family. MdtH (TC 2.A.1.2.21) subfamily.

It is found in the cell inner membrane. The sequence is that of Multidrug resistance protein MdtH from Enterobacter sp. (strain 638).